The sequence spans 418 residues: Serine hydroxymethyltransferase (418 aa).

(6S)-5,6,7,8-tetrahydrofolate contacts are provided by residues leucine 121 and 125-127 (GHL). An N6-(pyridoxal phosphate)lysine modification is found at lysine 230. 355–357 (SPF) contacts (6S)-5,6,7,8-tetrahydrofolate.

This sequence belongs to the SHMT family. As to quaternary structure, homodimer. The cofactor is pyridoxal 5'-phosphate.

It is found in the cytoplasm. It carries out the reaction (6R)-5,10-methylene-5,6,7,8-tetrahydrofolate + glycine + H2O = (6S)-5,6,7,8-tetrahydrofolate + L-serine. It functions in the pathway one-carbon metabolism; tetrahydrofolate interconversion. It participates in amino-acid biosynthesis; glycine biosynthesis; glycine from L-serine: step 1/1. Catalyzes the reversible interconversion of serine and glycine with tetrahydrofolate (THF) serving as the one-carbon carrier. This reaction serves as the major source of one-carbon groups required for the biosynthesis of purines, thymidylate, methionine, and other important biomolecules. Also exhibits THF-independent aldolase activity toward beta-hydroxyamino acids, producing glycine and aldehydes, via a retro-aldol mechanism. This chain is Serine hydroxymethyltransferase, found in Streptococcus pyogenes serotype M18 (strain MGAS8232).